A 462-amino-acid chain; its full sequence is Aquaporin-1 (462 aa).

Over residues 1 to 11 the composition is skewed to polar residues; the sequence is MTMRSPLTNDH. Residues 1–24 are disordered; that stretch reads MTMRSPLTNDHPQPLRASPLSEHD. The Cytoplasmic portion of the chain corresponds to 1-146; the sequence is MTMRSPLTND…KWMNSDWKNH (146 aa). A helical membrane pass occupies residues 147-167; sequence IVAVIGELIGTSLFLFFGYAG. Topologically, residues 168-182 are extracellular; it reads IEVAKLQGREPPDLE. The helical transmembrane segment at 183–203 threads the bilayer; the sequence is VLFYISATFGASLMVTAWIFF. At 204-229 the chain is on the cytoplasmic side; that stretch reads RISGGLFNPAVTLALAILKAVSPIRA. The NPA 1 signature appears at 211–213; it reads NPA. A helical transmembrane segment spans residues 230-250; it reads FLLVITQLGASCLAAILVQEI. Topologically, residues 251 to 269 are extracellular; that stretch reads FPKQLDVATTLGSGTSMGQ. The helical transmembrane segment at 270–290 threads the bilayer; that stretch reads GFVIEAITTAALIFTIIMLAV. At 291 to 296 the chain is on the cytoplasmic side; the sequence is EKHKAT. The helical transmembrane segment at 297 to 317 threads the bilayer; it reads FVAPIGIGLALFVAHMVAVPF. The Extracellular portion of the chain corresponds to 318-341; sequence TGASLNPARSFGPSAIVWNFPREH. Positions 323-325 match the NPA 2 motif; sequence NPA. Residues 342–362 traverse the membrane as a helical segment; sequence WIYWVGPILGAGLAVLFFRLI. Residues 363 to 462 lie on the Cytoplasmic side of the membrane; that stretch reads KLMEYEMANP…WRRQQYRNVV (100 aa). The disordered stretch occupies residues 407–433; that stretch reads GKSWYRDDSSSGSMRRKESVNSFTGGR. Residues 410–425 are compositionally biased toward basic and acidic residues; sequence WYRDDSSSGSMRRKES.

Belongs to the MIP/aquaporin (TC 1.A.8) family.

The protein localises to the membrane. It catalyses the reaction H2O(in) = H2O(out). Its function is as follows. Water channel required to facilitate the transport of water across membranes. Involved in conidiation. The polypeptide is Aquaporin-1 (Botryotinia fuckeliana (strain B05.10) (Noble rot fungus)).